A 236-amino-acid polypeptide reads, in one-letter code: Pyridoxal 5'-phosphate synthase subunit PdxT (236 aa).

Glycine 61 to serine 63 lines the L-glutamine pocket. Residue cysteine 93 is the Nucleophile of the active site. L-glutamine is bound by residues arginine 127 and isoleucine 163–arginine 164. Active-site charge relay system residues include histidine 215 and glutamate 217.

The protein belongs to the glutaminase PdxT/SNO family. In the presence of PdxS, forms a dodecamer of heterodimers. Only shows activity in the heterodimer.

The catalysed reaction is aldehydo-D-ribose 5-phosphate + D-glyceraldehyde 3-phosphate + L-glutamine = pyridoxal 5'-phosphate + L-glutamate + phosphate + 3 H2O + H(+). It catalyses the reaction L-glutamine + H2O = L-glutamate + NH4(+). It participates in cofactor biosynthesis; pyridoxal 5'-phosphate biosynthesis. In terms of biological role, catalyzes the hydrolysis of glutamine to glutamate and ammonia as part of the biosynthesis of pyridoxal 5'-phosphate. The resulting ammonia molecule is channeled to the active site of PdxS. The protein is Pyridoxal 5'-phosphate synthase subunit PdxT of Arthrobacter sp. (strain FB24).